A 311-amino-acid chain; its full sequence is Probable protein phosphatase 2C 59 (311 aa).

Positions 1–14 are enriched in low complexity; the sequence is MGYLNSVLSSSSQV. Positions 1-26 are disordered; sequence MGYLNSVLSSSSQVHSDDGPVSGGGL. A PPM-type phosphatase domain is found at 33-279; the sequence is SYGYASSPGK…DNITCVVVRF (247 aa). Aspartate 69, glycine 70, aspartate 231, and aspartate 270 together coordinate Mn(2+).

Belongs to the PP2C family. As to quaternary structure, interacts with the Pseudomonas syringae pv. maculicola effector HopW1-1 (via C-terminus). Requires Mg(2+) as cofactor. The cofactor is Mn(2+).

It carries out the reaction O-phospho-L-seryl-[protein] + H2O = L-seryl-[protein] + phosphate. It catalyses the reaction O-phospho-L-threonyl-[protein] + H2O = L-threonyl-[protein] + phosphate. Inhibited by sodium fluoride (NaF). In terms of biological role, protein phosphatase that modulates defense response to pathogenic bacteria, conferring resistance and promoting salicylic acid (SA) accumulation. The chain is Probable protein phosphatase 2C 59 (WIN2) from Arabidopsis thaliana (Mouse-ear cress).